The primary structure comprises 194 residues: Phosphoheptose isomerase (194 aa).

The 158-residue stretch at I37 to A194 folds into the SIS domain. Substrate is bound at residue N52 to G54. Zn(2+) is bound by residues H61 and E65. Substrate-binding positions include E65, N93–D94, S119–S121, S124, and Q172. Residues Q172 and H180 each coordinate Zn(2+).

This sequence belongs to the SIS family. GmhA subfamily. As to quaternary structure, homotetramer. Zn(2+) serves as cofactor.

It is found in the cytoplasm. The catalysed reaction is 2 D-sedoheptulose 7-phosphate = D-glycero-alpha-D-manno-heptose 7-phosphate + D-glycero-beta-D-manno-heptose 7-phosphate. Its pathway is carbohydrate biosynthesis; D-glycero-D-manno-heptose 7-phosphate biosynthesis; D-glycero-alpha-D-manno-heptose 7-phosphate and D-glycero-beta-D-manno-heptose 7-phosphate from sedoheptulose 7-phosphate: step 1/1. In terms of biological role, catalyzes the isomerization of sedoheptulose 7-phosphate in D-glycero-D-manno-heptose 7-phosphate. This is Phosphoheptose isomerase from Haemophilus influenzae (strain PittGG).